A 1068-amino-acid polypeptide reads, in one-letter code: Huntingtin-interacting protein 1-related protein (1068 aa).

Met1 is modified (N-acetylmethionine). The 129-residue stretch at 23–151 (EREQFDKTQA…SFHLKHPQFP (129 aa)) folds into the ENTH domain. Positions 347-599 (SVKDDRDLQI…RSSQEQGELQ (253 aa)) form a coiled coil. 3 disordered regions span residues 424-443 (LEGE…ASAT), 529-549 (ARAQ…SSRL), and 582-608 (AALS…RESQ). 2 stretches are compositionally biased toward basic and acidic residues: residues 425–443 (EGER…ASAT) and 539–549 (EQSKSELSSRL). Low complexity predominate over residues 590–600 (RSSQEQGELQG). Positions 771–1012 (SLDVRQEELG…ELRKQHYVLA (242 aa)) constitute an I/LWEQ domain. Residues 867–924 (RWTEGLISASKAVGWGATQLVEAADKVVLHTGKYEELIVCSHEIAASTAQLVAASKVK) form an important for actin binding region. The segment at 1016–1060 (GSPGEEVAIRPSTAPRSVTTKKPPLAQKPSVAPRQDHQLDKKDGI) is disordered. Ser1017 is modified (phosphoserine). Over residues 1049-1059 (RQDHQLDKKDG) the composition is skewed to basic and acidic residues.

This sequence belongs to the SLA2 family. In terms of assembly, homodimer. Interacts with actin; homodimerization promotes actin binding. Interacts with CLTB. Interacts with HIP1. Interacts (via ENTH and I/LWEQ domains) with BCL2L10. Brain, heart, kidney, pancreas, and liver, but not in lung or placenta.

The protein resides in the cytoplasm. Its subcellular location is the perinuclear region. It is found in the endomembrane system. It localises to the cytoplasmic vesicle. The protein localises to the clathrin-coated vesicle membrane. In terms of biological role, component of clathrin-coated pits and vesicles, that may link the endocytic machinery to the actin cytoskeleton. Binds 3-phosphoinositides (via ENTH domain). May act through the ENTH domain to promote cell survival by stabilizing receptor tyrosine kinases following ligand-induced endocytosis. The polypeptide is Huntingtin-interacting protein 1-related protein (HIP1R) (Homo sapiens (Human)).